Reading from the N-terminus, the 387-residue chain is Protein disulfide isomerase pTAC5, chloroplastic (387 aa).

The N-terminal 40 residues, 1–40 (MASSSLPLSLPFPLRSLTSTTRSLPFQCSPLFFSIPSSIV), are a transit peptide targeting the chloroplast. Coiled-coil stretches lie at residues 72 to 106 (EQRW…LGNS) and 143 to 163 (REQI…AEEK). Residues 318–387 (PVDRSESTNT…CDVCDGKKNL (70 aa)) form a CR-type zinc finger.

In terms of assembly, interacts with HSP21; the formed complex associates with the plastid-encoded RNA polymerase (PEP) complex not only during transcription initiation, but also during elongation and termination, and with a stronger efficiency in illuminated chloroplasts. Binds to promoter regions of PEP-dependent genes, especially after a heat stress. Interacts with FLN2.

Its subcellular location is the plastid. It localises to the chloroplast stroma. The protein resides in the chloroplast nucleoid. The catalysed reaction is Catalyzes the rearrangement of -S-S- bonds in proteins.. Exhibits zinc-dependent disulfide isomerase activity. Required for seedling and chloroplast development under heat stress, probably by maintaining plastid-encoded RNA polymerase (PEP)-dependent transcription. The chain is Protein disulfide isomerase pTAC5, chloroplastic from Arabidopsis thaliana (Mouse-ear cress).